The following is a 100-amino-acid chain: Esterase PE11 (100 aa).

Positions 4-94 constitute a PE domain; sequence VTTRPDSIGE…TSYWLTELAN (91 aa).

The protein belongs to the mycobacterial PE family.

The protein localises to the secreted. The protein resides in the cell wall. The catalysed reaction is an acetyl ester + H2O = an aliphatic alcohol + acetate + H(+). The enzyme catalyses a butanoate ester + H2O = an aliphatic alcohol + butanoate + H(+). It catalyses the reaction an octanoate ester + H2O = an aliphatic alcohol + octanoate + H(+). Involved in cell wall lipids remodeling and in virulence. Restricts the biofilm growth and is essential for the optimal intracellular survival of M.tuberculosis. Shows esterase activity with a preference for short-chain esters, particularly pNP-acetate (C2) and pNP-butyrate (C4). Has weaker activity with pNP-octanoate (C8), pNP-laurate (C12) and pNP-myristate (C14). Shows weak long-chain triacylglycerol (TAG) hydrolase activity in vitro. Not necessary for PPE17 stability or for its localization on the mycobacterial surface. In Mycobacterium tuberculosis (strain ATCC 25618 / H37Rv), this protein is Esterase PE11.